Consider the following 907-residue polypeptide: MAAPLVPLSQQIPGGNPLYESYYKQVDPAYTGRVGASEAALFLKKSGLSDIILGKIWDLADPEGKGFLDKQGFYVALRLVACAQSGHEVTLSSLSLTMPPPKFHDTSSPLMATQSSAETHWAVRVEEKAKFDGIFESLLPVNGLLSGDKVKPVLMNSKLPLDVLGRVWDLSDIDKDGHLDRDEFAVAMHLVYRALEKEPVPSILPPPLIPPSKRKKTVFAGAVPVLPASPPPKDSLRSTPSHGSVSSLNSTGSLSPKHSVKQPPVAWVVPVADKMRFDEIFLKTDLDLDGYVSGQEVKEIFMHSGLTQNLLAHIWALADTRQTGKLSKEQFALAMYFIQQKVSKGIDPPQVLSPDMVPPSERGTPIPDSSSTLASGEFTGVKELDDISQEIAQLQREKYSLEQDIREKEEAIRQKTSEVQELQNDLDRETSSLQELEAQKQDAQDRLDEMDQQKAKLRDMLSDVRQKCQDETQTISSLKTQIQSQESDLKSQEDDLNRAKSELNRLQQEETQLEQSIQAGRAQLETILRSLKCTQDDINQARSKLSQLQESHLEAHRSLEQYDQVPDGVSGTSLPDLATLNEGILLAERGGFGAMDDPFKNKALLFSNNSQELHPDPFQAEDPFKSDPFKGADPFKGDPFQSDPFSEQQTAATDPFGGDPFKESDPFHSSSSDDFFKKQTKNDPFTSDPFTKNPSLPSKLDPFESSDPFSSSSISSKGSDPFGTLDPFGSSSFSSAEGFADFSQMSKPPPSGPFSSSLGGTGFSDDPFKSKQDTPALPPKKPAPPRPKPPSGQSTPVSQLGSSDFPESPDPFQPLGADSGDPFQNKKGFGDPFSGKDPFAPSSSAKPPKTSSSGFADFTSFGNEEQQLAWAKRESEKAEQERLARLRRQEQEDLELAIALSKADMPA.

Ala-2 is modified (N-acetylalanine). An EH 1 domain is found at 15-104 (GNPLYESYYK…SLTMPPPKFH (90 aa)). Positions 15–368 (GNPLYESYYK…PSERGTPIPD (354 aa)) are interaction with DAB2. Residues 48–83 (LSDIILGKIWDLADPEGKGFLDKQGFYVALRLVACA) enclose the EF-hand 1 domain. Phosphotyrosine is present on Tyr-74. Residues Ser-107 and Ser-108 each carry the phosphoserine modification. The EH 2 domain maps to 127 to 215 (EKAKFDGIFE…PPLIPPSKRK (89 aa)). One can recognise an EF-hand 2 domain in the interval 159–194 (LPLDVLGRVWDLSDIDKDGHLDRDEFAVAMHLVYRA). Ca(2+) contacts are provided by Asp-172, Asp-174, Asp-176, His-178, and Glu-183. Residues Ser-229, Ser-244, Ser-253, Ser-255, and Ser-259 each carry the phosphoserine modification. The disordered stretch occupies residues 229-260 (SPPPKDSLRSTPSHGSVSSLNSTGSLSPKHSV). Residues 241–255 (SHGSVSSLNSTGSLS) are compositionally biased toward low complexity. EF-hand domains are found at residues 272–307 (ADKM…SGLT) and 308–341 (QNLL…IQQK). The EH 3 domain maps to 273 to 363 (DKMRFDEIFL…PDMVPPSERG (91 aa)). The residue at position 360 (Ser-360) is a Phosphoserine. Thr-364 is modified (phosphothreonine). Residues Ser-369 and Ser-375 each carry the phosphoserine modification. Residues 384 to 551 (LDDISQEIAQ…RSKLSQLQES (168 aa)) adopt a coiled-coil conformation. Ser-558 is subject to Phosphoserine. The residue at position 562 (Tyr-562) is a Phosphotyrosine. A Phosphoserine modification is found at Ser-610. The segment at 611–860 (QELHPDPFQA…SSSGFADFTS (250 aa)) is disordered. The segment covering 622–636 (DPFKSDPFKGADPFK) has biased composition (basic and acidic residues). The span at 643–652 (DPFSEQQTAA) shows a compositional bias: polar residues. Phosphoserine occurs at positions 664, 670, 695, 715, and 732. A compositionally biased stretch (polar residues) spans 682–696 (NDPFTSDPFTKNPSL). Low complexity predominate over residues 703–743 (FESSDPFSSSSISSKGSDPFGTLDPFGSSSFSSAEGFADFS). Residues 776-790 (ALPPKKPAPPRPKPP) are compositionally biased toward pro residues. A Phosphoserine modification is found at Ser-791. A compositionally biased stretch (polar residues) spans 791-802 (SGQSTPVSQLGS). A Phosphothreonine modification is found at Thr-795. The segment covering 840–853 (APSSSAKPPKTSSS) has biased composition (low complexity). 2 UIM domains span residues 863–882 (NEEQ…EQER) and 889–907 (QEQE…DMPA).

Interacts with EPS15, AGFG1/HRB and AGFG2/HRBL. Associates with the clathrin-associated adapter protein complex 2 (AP-2). Interacts with FCHO1. Interacts with FCHO2. Interacts (via EH domains) with DAB2. Interacts with UBQLN1 (via ubiquitin-like domain). Interacts with CAVIN3 (via leucine-zipper domain). Interacts with REPS2. Phosphorylated on tyrosine residues by EGFR.

The protein localises to the cell membrane. It localises to the nucleus. Its subcellular location is the membrane. The protein resides in the coated pit. In terms of biological role, seems to be a constitutive component of clathrin-coated pits that is required for receptor-mediated endocytosis. Involved in endocytosis of integrin beta-1 (ITGB1) and transferrin receptor (TFR); internalization of ITGB1 as DAB2-dependent cargo but not TFR seems to require association with DAB2. The protein is Epidermal growth factor receptor substrate 15-like 1 (Eps15l1) of Mus musculus (Mouse).